The primary structure comprises 813 residues: MIRPRSNLGTLPEEPSVESKSGRTLAGITSSRKESGMRSRTSSGSAQAVGLGLGRRPSDNLFHGHADPLDTMQMLSEALPQPPKIEHGMRRERPISNDSIMTTKSSEIFSTSSSDTQSNISVATNDSEDHSFGMDKSVDNSSTNATLTNRSIENRSNGDSYSIGEKSDVSVNRSTKSGNNPLQRTQSETISVNMSHNRSMNGAMKQPTPPFMGKNSSIPNLRYNSQPQQDNRSVPNGEFGSKLYNLSNSTSAIIPNAGTGSKLALTPSQRYRLRKEQSEHALRDVIKRKEKLYDEQDGIIELQEGDIDGSFIFNVPMSSYSTTSFLNTTRQKDSATNSSSTITERITPGENQSQNNRESNMSFASTISSTSMLDFFEMPTSPIPGVNKVSDFQYLQDTTKHLSSVYLHSSTKLSKSKLSERTASADCLPLEFKEASEKGMEDLLLVSENKLDAVSHTRPSWLPPKDPEEKKLHEREISKTLSMASLDQLEKNKDRDSKIIKDETNKQKYVLLVDRNITRKSSLQSLKKIIWETPINAELRNHIYDMVLQSEARLVTERFTESFDDIIKLSNRIELTKTKEIEIRNLITANIENKAGGKYDVSDDLVLMLKLKSISQQGILPGDELLFHHLLIDDSFENLNQVWEMVNLIQMTCFNEITKDKFDSKILEKSGVVASYMLQDDSFKHEFNANCLNSNTWWNILERVNHDLFMWIIDIIVTMNSQPFKNSPINKEKYSEVNWDVYRDNKVLINYQILISFALNVLLNYHFGFNDLKSLADVKDKNFCIPISEENYLDIDEINSLFVGKWKHYFKKF.

Disordered stretches follow at residues 1 to 66, 107 to 240, and 331 to 359; these read MIRP…HGHA, EIFS…GEFG, and QKDS…NRES. A compositionally biased stretch (basic and acidic residues) spans 56 to 66; the sequence is RPSDNLFHGHA. Residues 107 to 121 show a composition bias toward low complexity; the sequence is EIFSTSSSDTQSNIS. Positions 127–138 are enriched in basic and acidic residues; the sequence is SEDHSFGMDKSV. Composition is skewed to polar residues over residues 139–160, 169–200, and 214–234; these read DNSS…NGDS, VSVN…NRSM, and KNSS…NRSV.

Belongs to the SBE2 family.

Its subcellular location is the cytoplasm. The protein resides in the golgi apparatus. With SBE2, is involved in cell wall integrity and polarity processes like bud growth. The protein is Protein SBE22 (SBE22) of Candida glabrata (strain ATCC 2001 / BCRC 20586 / JCM 3761 / NBRC 0622 / NRRL Y-65 / CBS 138) (Yeast).